We begin with the raw amino-acid sequence, 480 residues long: Cysteine--tRNA ligase (480 aa).

Cys-29 is a binding site for Zn(2+). Positions 31 to 41 match the 'HIGH' region motif; it reads PTVYGHAHLGH. Residues Cys-221, His-246, and Glu-250 each coordinate Zn(2+). A 'KMSKS' region motif is present at residues 278–282; the sequence is KMGKS. ATP is bound at residue Lys-281.

The protein belongs to the class-I aminoacyl-tRNA synthetase family. In terms of assembly, monomer. It depends on Zn(2+) as a cofactor.

The protein localises to the cytoplasm. It carries out the reaction tRNA(Cys) + L-cysteine + ATP = L-cysteinyl-tRNA(Cys) + AMP + diphosphate. This chain is Cysteine--tRNA ligase, found in Chlorobium chlorochromatii (strain CaD3).